Here is a 143-residue protein sequence, read N- to C-terminus: Competence protein ComGD (143 aa).

Positions 1 to 10 are excised as a propeptide; the sequence is MNIKLNEEKG. Phenylalanine 11 is subject to N-methylphenylalanine. Residues 11 to 31 traverse the membrane as a helical segment; sequence FTLLESLLVLSLASILLVAVF.

The transformation pili are flexible filaments, consisting mainly of the major pilin ComGC and smaller amounts of the minor pilins, including at least ComGD, ComGF and ComGG. Interacts with ComGF. Interacts with ComGG. Post-translationally, processing of ComGD in competent cells requires ComC.

The protein resides in the cell membrane. It localises to the cell surface. Required for formation of the type IV-like pilus (T4P) that plays a role in transformation. Transformation pili are dynamically extended and retracted, perhaps thereby promoting DNA uptake and transformation. Required for transformation and DNA binding. This Bacillus subtilis (strain 168) protein is Competence protein ComGD (comGD).